The sequence spans 449 residues: tRNA(Ile)-lysidine synthase (449 aa).

Residue 35–40 (SGGIDS) coordinates ATP.

It belongs to the tRNA(Ile)-lysidine synthase family.

The protein resides in the cytoplasm. It carries out the reaction cytidine(34) in tRNA(Ile2) + L-lysine + ATP = lysidine(34) in tRNA(Ile2) + AMP + diphosphate + H(+). Its function is as follows. Ligates lysine onto the cytidine present at position 34 of the AUA codon-specific tRNA(Ile) that contains the anticodon CAU, in an ATP-dependent manner. Cytidine is converted to lysidine, thus changing the amino acid specificity of the tRNA from methionine to isoleucine. This chain is tRNA(Ile)-lysidine synthase, found in Coxiella burnetii (strain RSA 493 / Nine Mile phase I).